Here is a 227-residue protein sequence, read N- to C-terminus: MNRLLSLFQLCDSNFPSGSFSHSFGLETYIQEKVITDKESFKNAISVYIRKQLFFTEGLACILAYEAMEKNEPSALVELDHILFASNVAQETRSGNQRMGERMAKLCVDLYPSPILIEYTNRIKEKKAYGHSAIVFAIVAYHLKVTKETAVGAYLFANVSALVQNAVRGIPIGQTDGQRILVEIQPLLEEGVRTISQLPKEDLGAVSPGMEIAQMRHERLNVRLFMS.

The protein belongs to the UreF family. UreD, UreF and UreG form a complex that acts as a GTP-hydrolysis-dependent molecular chaperone, activating the urease apoprotein by helping to assemble the nickel containing metallocenter of UreC. The UreE protein probably delivers the nickel.

It localises to the cytoplasm. Functionally, required for maturation of urease via the functional incorporation of the urease nickel metallocenter. The sequence is that of Urease accessory protein UreF from Bacillus sp. (strain TB-90).